A 56-amino-acid polypeptide reads, in one-letter code: Ovomucoid (56 aa).

The Kazal-like domain maps to Val-6–Cys-56. Disulfide bonds link Cys-8–Cys-38, Cys-16–Cys-35, and Cys-24–Cys-56. N-linked (GlcNAc...) asparagine glycosylation is present at Asn-45.

The protein resides in the secreted. The polypeptide is Ovomucoid (Callipepla californica (California quail)).